The sequence spans 400 residues: Probable aspartate/prephenate aminotransferase (400 aa).

L-aspartate is bound by residues Gly-39, Trp-125, and Asn-175. N6-(pyridoxal phosphate)lysine is present on Lys-239. Arg-375 is a binding site for L-aspartate.

The protein belongs to the class-I pyridoxal-phosphate-dependent aminotransferase family. In terms of assembly, homodimer. Requires pyridoxal 5'-phosphate as cofactor.

The protein resides in the cytoplasm. It carries out the reaction L-aspartate + 2-oxoglutarate = oxaloacetate + L-glutamate. The catalysed reaction is L-arogenate + 2-oxoglutarate = prephenate + L-glutamate. Its function is as follows. Catalyzes the reversible conversion of aspartate and 2-oxoglutarate to glutamate and oxaloacetate. Can also transaminate prephenate in the presence of glutamate. This is Probable aspartate/prephenate aminotransferase (aspC) from Rhizobium leguminosarum bv. phaseoli.